The primary structure comprises 588 residues: L-fucose isomerase (588 aa).

Residues Glu-335 and Asp-359 each act as proton acceptor in the active site. Positions 335, 359, and 525 each coordinate Mn(2+).

The protein belongs to the L-fucose isomerase family. It depends on Mn(2+) as a cofactor.

Its subcellular location is the cytoplasm. It carries out the reaction L-fucose = L-fuculose. It functions in the pathway carbohydrate degradation; L-fucose degradation; L-lactaldehyde and glycerone phosphate from L-fucose: step 1/3. Converts the aldose L-fucose into the corresponding ketose L-fuculose. The chain is L-fucose isomerase from Streptococcus pneumoniae (strain 70585).